We begin with the raw amino-acid sequence, 74 residues long: Amphipathic peptide CT1 (74 aa).

Positions 1-23 are cleaved as a signal peptide; sequence MKTQIVILFISMIMLQMFVQIEG. Val37 is subject to Valine amide. Residues 41-74 constitute a propeptide that is removed on maturation; the sequence is GLRNLDDLDDLDLDHLFDSDVSDADLRLLKQMFR.

Belongs to the non-disulfide-bridged peptide (NDBP) superfamily. Short antimicrobial peptide (group 4) family. As to expression, expressed by the venom gland.

The protein resides in the secreted. The protein localises to the target cell membrane. Functionally, antimicrobial peptide that is rapidly bactericidal against Gram-positive bacteria (MIC=12.5 ug/ml against S.aureus, and MIC=100 ug/ml against M.luteus). Is also active against clinical antibiotics-resistant bacterial strains. The chain is Amphipathic peptide CT1 from Scorpiops tibetanus (Scorpion).